The following is a 102-amino-acid chain: Putative pterin-4-alpha-carbinolamine dehydratase (102 aa).

Belongs to the pterin-4-alpha-carbinolamine dehydratase family.

It carries out the reaction (4aS,6R)-4a-hydroxy-L-erythro-5,6,7,8-tetrahydrobiopterin = (6R)-L-erythro-6,7-dihydrobiopterin + H2O. The sequence is that of Putative pterin-4-alpha-carbinolamine dehydratase from Burkholderia lata (strain ATCC 17760 / DSM 23089 / LMG 22485 / NCIMB 9086 / R18194 / 383).